Reading from the N-terminus, the 721-residue chain is MFHKHSVEIDWGGRPLKLETGKIARQADGAVVATYGETVVLATVVAAKTPREGVDFLPLTVDYIEKTYAAGRIPGGYFKREGRPTEKETLVSRLIDRPIRPLFVDGWRNETQVIVTVLSHDMENDPDILALVATSAALTLSGAPFKGPIGAARVGFINDEYVLNPVLDEMIETQLDLVVAGTADAVLMVESEAKELNEDIMLGAVMFGHRHFQPVVQAIIELAEKAAKEPRDVKVIDESVLEKEILGLIEQDLRAAYAIPVKQDRYAAVGKAKDKVMAHYFPEGQEPQYDKLRIAGVFKELEAKIVRWNILDTGKRIDGRDSTTVRQIIAEVGVLPRAHGSALFTRGETQALVVTTLGTGEDEQYIDSLSGTYKEQFLLHYNFPPFSVGETGRMGGTKRREIGHGKLAWRALHPVLPPHHEFPYTLRVVSEITESNGSSSMASVCGASLALMDAGVPLKRPTAGIAMGLILEGERFAVLSDILGDEDHLGDMDFKVAGTDHGITSLQMDIKIAGITEEIMKVALGQAKEGRIHILGEMSKALTNARAELGEYAPRIETFKIPTDKIREVIGTGGKVIREIVEKTGAKVNIDDDGTVKVASSDGESIKAAIKWIKSIASDPELNAIYDGTVVKVMEFGAFVNFFGAKDGLVHISQLAAGRVQKTSDVVKEGDKVKVKLLGFDDRGKTRLSMKVVDQETGEDLEAKQKAEAEKAKAEGAPAAE.

Mg(2+) contacts are provided by Asp487 and Asp493. Residues 554–613 (PRIETFKIPTDKIREVIGTGGKVIREIVEKTGAKVNIDDDGTVKVASSDGESIKAAIKWI) form the KH domain. In terms of domain architecture, S1 motif spans 623 to 691 (NAIYDGTVVK…DRGKTRLSMK (69 aa)). A disordered region spans residues 697–721 (TGEDLEAKQKAEAEKAKAEGAPAAE). Positions 701 to 714 (LEAKQKAEAEKAKA) are enriched in basic and acidic residues.

This sequence belongs to the polyribonucleotide nucleotidyltransferase family. Mg(2+) serves as cofactor.

The protein resides in the cytoplasm. The catalysed reaction is RNA(n+1) + phosphate = RNA(n) + a ribonucleoside 5'-diphosphate. Involved in mRNA degradation. Catalyzes the phosphorolysis of single-stranded polyribonucleotides processively in the 3'- to 5'-direction. This is Polyribonucleotide nucleotidyltransferase from Rhodopseudomonas palustris (strain BisA53).